The following is a 61-amino-acid chain: Large ribosomal subunit protein uL30 (61 aa).

Belongs to the universal ribosomal protein uL30 family. In terms of assembly, part of the 50S ribosomal subunit.

In Corynebacterium efficiens (strain DSM 44549 / YS-314 / AJ 12310 / JCM 11189 / NBRC 100395), this protein is Large ribosomal subunit protein uL30.